Reading from the N-terminus, the 276-residue chain is Large ribosomal subunit protein uL2 (276 aa).

Positions 219-268 (TVRGSVMNPNDHPHGGGEGRQPVGRKSPMTPWGKPALGLKTRNKKAKSSK) are disordered.

It belongs to the universal ribosomal protein uL2 family. As to quaternary structure, part of the 50S ribosomal subunit. Forms a bridge to the 30S subunit in the 70S ribosome.

One of the primary rRNA binding proteins. Required for association of the 30S and 50S subunits to form the 70S ribosome, for tRNA binding and peptide bond formation. It has been suggested to have peptidyltransferase activity; this is somewhat controversial. Makes several contacts with the 16S rRNA in the 70S ribosome. This Lactococcus lactis subsp. lactis (strain IL1403) (Streptococcus lactis) protein is Large ribosomal subunit protein uL2.